We begin with the raw amino-acid sequence, 369 residues long: Nuclear pore complex-interacting protein family member A7 (369 aa).

Positions 151–171 (SMKEREHREEERQVSEAEENG) are disordered.

This sequence belongs to the NPIP family.

The polypeptide is Nuclear pore complex-interacting protein family member A7 (NPIPA7) (Homo sapiens (Human)).